We begin with the raw amino-acid sequence, 499 residues long: MEEEGVKEGGQRPRSAQTADKAGWIKKSSGGFLGLWKDRYLLLCQAQLLVYENEDEQKCVETVELGSYEKCQDLRALLKRKHRFILLRSPGNKVSDIKFQAPSGEEKESWIKALNEGINRGKNKAFDEVKVDKSCVLEHVTRDRVRRDQRRRPPTRVHLKEVANAASDGLSRLDLDVPDSGPPVLAPSNDVDAAQPRETPRPPMPPAKPSPAPETSSAGDRMETPVGQSAPAPVPASSEAHPGSQEDLETPVVEDSDSEQPPNRILPDKLKVSWENPSPEEAPDSESAEPPQVPGAETSEAGPREGGKPPTPPPKILSEKLKASMSGMEASGPAQSPGASEASAPGPAEVSVNGVDDSPEPLQSSQAAGPPGTPPKAATTSTTLPPWDLQPQLHPRCSSLGDLLGEGPRRRRQPGEQLHRAQLEVKVASEKTEKLLNKVLGGESASVNAETLLSQAVEQLRQATQVLQEIRDLEEMNREAPGLREKRRELVTLYRRSVP.

A compositionally biased stretch (basic and acidic residues) spans 1 to 11; the sequence is MEEEGVKEGGQ. The disordered stretch occupies residues 1 to 21; the sequence is MEEEGVKEGGQRPRSAQTADK. Residues 18–119 enclose the PH domain; sequence TADKAGWIKK…WIKALNEGIN (102 aa). A Phosphoserine modification is found at serine 167. The disordered stretch occupies residues 170 to 419; it reads LSRLDLDVPD…RRRQPGEQLH (250 aa). Residues 201–212 are compositionally biased toward pro residues; that stretch reads RPPMPPAKPSPA. Residues 229-238 are compositionally biased toward low complexity; sequence SAPAPVPASS. Residues serine 237 and serine 238 each carry the phosphoserine modification. Acidic residues predominate over residues 246–258; the sequence is EDLETPVVEDSDS. Serine 273 carries the post-translational modification Phosphoserine. 2 positions are modified to phosphothreonine: threonine 298 and threonine 311. Composition is skewed to low complexity over residues 329-349 and 367-386; these read EASG…GPAE and AAGP…TLPP. Serine 399 is subject to Phosphoserine. Residues 416–492 adopt a coiled-coil conformation; it reads EQLHRAQLEV…LREKRRELVT (77 aa).

The chain is Pleckstrin homology domain-containing family O member 2 (PLEKHO2) from Bos taurus (Bovine).